Reading from the N-terminus, the 699-residue chain is Receptor-type tyrosine-protein phosphatase epsilon (699 aa).

Residues 1-22 (MEPFCPLLLASFSLSLATAGQG) form the signal peptide. The segment covering 20–36 (GQGNDTTPTESNWTSTT) has biased composition (low complexity). A disordered region spans residues 20 to 41 (GQGNDTTPTESNWTSTTAGPPD). Asn23 and Asn31 each carry an N-linked (GlcNAc...) asparagine glycan. Residues 23–47 (NDTTPTESNWTSTTAGPPDPGTSQP) lie on the Extracellular side of the membrane. A helical membrane pass occupies residues 48–68 (LLTWLLLPLLLLLFLLAAYFF). Residues 69–699 (RFRKQRKAVV…DIFSDYANFK (631 aa)) lie on the Cytoplasmic side of the membrane. 2 Tyrosine-protein phosphatase domains span residues 134–393 (FREE…LLEY) and 425–688 (LEEE…VQDF). Residues Asp302, 334 to 340 (CSAGVGR), and Gln378 contribute to the substrate site. Cys334 functions as the Phosphocysteine intermediate in the catalytic mechanism. The active-site Phosphocysteine intermediate is Cys629. Tyr695 bears the Phosphotyrosine mark.

It belongs to the protein-tyrosine phosphatase family. Receptor class 4 subfamily. Monomer. Isoform 2: Homodimer. Can form oligomers. Dimerization is increased by oxidative stress and decreased by EGFR. Isoform 2 interacts with GRB2. In terms of processing, a catalytically active cytoplasmic form (p65) is produced by proteolytic cleavage of either isoform 1, isoform 2 or isoform 3. Post-translationally, isoform 1 and isoform 2 are phosphorylated on tyrosine residues by tyrosine kinase Neu. N-glycosylated. As to expression, isoform 1 is highly expressed in the brain, lung, spleen and testis. Isoform 2 is highly expressed in thymus, spleen and lung. Isoform 1 and isoform 2 are expressed in primary hepatocytes.

The protein resides in the cell membrane. It is found in the cytoplasm. It carries out the reaction O-phospho-L-tyrosyl-[protein] + H2O = L-tyrosyl-[protein] + phosphate. Isoform 1 plays a critical role in signaling transduction pathways and phosphoprotein network topology in red blood cells. May play a role in osteoclast formation and function. Acts as a negative regulator of insulin receptor (IR) signaling and is involved in insulin-induced glucose metabolism mainly through direct dephosphorylation and inactivation of IR in hepatocytes and liver. Functionally, isoform 2 acts as a negative regulator of insulin receptor (IR) signaling in skeletal muscle. Regulates insulin-induced tyrosine phosphorylation of insulin receptor (IR) and insulin receptor substrate 1 (IRS-1), phosphorylation of protein kinase B and glycogen synthase kinase-3 and insulin induced stimulation of glucose uptake. Its function is as follows. Isoform 1 and isoform 2 act as a negative regulator of FceRI-mediated signal transduction leading to cytokine production and degranulation, most likely by acting at the level of SYK to affect downstream events such as phosphorylation of SLP76 and LAT and mobilization of Ca(2+). The protein is Receptor-type tyrosine-protein phosphatase epsilon (Ptpre) of Rattus norvegicus (Rat).